A 217-amino-acid polypeptide reads, in one-letter code: Insulin-like growth factor 2.L (217 aa).

An N-terminal signal peptide occupies residues 1–56 (MEQLSCKHRSSSMEAEAQLCRQTESRSTQLPRMSVMRHLFLLSITFLVYTLDSAKA). The b stretch occupies residues 57–83 (YRPTETLCGGELVDTLQFVCGDRGFYF). 3 disulfide bridges follow: C64-C103, C76-C116, and C102-C107. The segment at 84–96 (STNNGRSNRRSNR) is c. The a stretch occupies residues 97–117 (GIVEECCFRSCDLELLETYCA). The tract at residues 118-123 (KPSKNE) is d. A propeptide spans 124 to 217 (RDVSTAPATA…LQQTSEPSHN (94 aa)) (e peptide).

Belongs to the insulin family.

It is found in the secreted. The insulin-like growth factors, isolated from plasma, are structurally and functionally related to insulin but have a much higher growth-promoting activity. Promotes anterior neural development. Acts as a ligand for integrin which is required for IGF2 signaling. The chain is Insulin-like growth factor 2.L from Xenopus laevis (African clawed frog).